Reading from the N-terminus, the 355-residue chain is MSTGSSDRKDDVKLLELLNSIDEQFLVPYKKPEDLRKISSTTKLQGSTPTKELDKLASVLKAHCTKIGIVCKPGTFDNNHKVVITEIQNFSRPLFYLLSLFPLFYNNKDCPKYFTDQLDESTLQLLDGLRDFIAELQERLKNDENASLDKERLTSVGKIFNACDSLSNCSKAGPYGILANILKDNVAIMDDTMNEIKEWLEEPDFSANSDDIFLDFEDSESESDSQKEEFDQEKVYENIKLFFDGFTRKIKLIKLLVSTFRKTLVSKDFTPKRNQAETLDSIHTYLKEIQLLLDEVVSTVQFEPKNFTNEEVKEEQAALVAVTKKVLIQMSKLYEGDPKRKKWIDTWEIKFNELF.

It localises to the cytoplasm. This is an uncharacterized protein from Saccharomyces cerevisiae (strain ATCC 204508 / S288c) (Baker's yeast).